Here is a 140-residue protein sequence, read N- to C-terminus: Large ribosomal subunit protein uL11 (140 aa).

The protein belongs to the universal ribosomal protein uL11 family. As to quaternary structure, part of the ribosomal stalk of the 50S ribosomal subunit. Interacts with L10 and the large rRNA to form the base of the stalk. L10 forms an elongated spine to which L12 dimers bind in a sequential fashion forming a multimeric L10(L12)X complex. In terms of processing, one or more lysine residues are methylated.

Functionally, forms part of the ribosomal stalk which helps the ribosome interact with GTP-bound translation factors. This is Large ribosomal subunit protein uL11 from Halothermothrix orenii (strain H 168 / OCM 544 / DSM 9562).